The following is a 71-amino-acid chain: Mitochondrial import protein 1 (71 aa).

A helical membrane pass occupies residues 22–44 (YAAINLGLPFLNGVMLGFGEIFA).

Belongs to the MIM1 family. Component of the mitochondrial outer import machinery (MIM) complex containing at least mim1 and mim2. Interacts with mim2. Interacts with mitophagy receptor atg43.

Its subcellular location is the mitochondrion outer membrane. In terms of biological role, component of the mitochondrial outer import machinery (MIM) complex that mediates transport of proteins into mitochondrial compartments. Promotes the insertion of tom70 into the outer mitochondrial membrane. Promotes the insertion of atg43 into the outer mitochondrial membrane. The MIM complex cooperates with the receptor tom70 in binding of precursor proteins and promotes their insertion and assembly into the outer membrane. Involved in import of the subset of proteins with multiple alpha-helical transmembrane segments. Required for the assembly of the TOM (translocase of outer membrane) receptor complex, which is responsible for the recognition and translocation of cytosolically synthesized mitochondrial preproteins. This Schizosaccharomyces pombe (strain 972 / ATCC 24843) (Fission yeast) protein is Mitochondrial import protein 1.